Reading from the N-terminus, the 1077-residue chain is ATP-dependent helicase HRQ1 (1077 aa).

Residues 299–483 (INSLHQGENV…DMFGINEVTL (185 aa)) enclose the Helicase ATP-binding domain. ATP is bound at residue 312-319 (TSTSSGKS). The short motif at 423-426 (DELH) is the DEAH box element. The Helicase C-terminal domain maps to 521–678 (ILVQLILNNV…DLVLDFNNIL (158 aa)).

This sequence belongs to the helicase family. HRQ1 subfamily. As to quaternary structure, forms heptamer rings. Interacts with RAD4. Requires Mg(2+) as cofactor.

The protein resides in the nucleus. The enzyme catalyses Couples ATP hydrolysis with the unwinding of duplex DNA by translocating in the 3'-5' direction.. The catalysed reaction is ATP + H2O = ADP + phosphate + H(+). Helicase with 3'-5' helicase activity involved in genome stability. Functions in the RAD4-dependent nucleotide excision repair (NER) pathway and plays a critical role in DNA interstrand cross-link repair. Unwinds relatively long duplex DNA up to 120-bp and requires a long 3'-tail of at least 70 nucleotides for efficient unwinding of duplex DNA. Activity is significantly stimulated by a preexisting fork structure. Shows both processive helicase and DNA strand annealing activities. Affects telomere length by a non-catalytic mechanism, probably through inhibiting telomerase by competing with it for ssDNA binding. The protein is ATP-dependent helicase HRQ1 of Saccharomyces cerevisiae (strain ATCC 204508 / S288c) (Baker's yeast).